The primary structure comprises 586 residues: Estrogen receptor (586 aa).

The interval 1 to 179 (MTMPLPNKTT…SMESTKETRY (179 aa)) is modulating. The tract at residues 144 to 173 (FYRSSSDNRRQSGRERMSSANDKGPPSMES) is disordered. A compositionally biased stretch (basic and acidic residues) spans 149 to 160 (SDNRRQSGRERM). NR C4-type zinc fingers lie at residues 180 to 200 (CAVC…CEGC) and 216 to 240 (CPAT…LRKC). A DNA-binding region (nuclear receptor) is located at residues 180-245 (CAVCSDYASG…RLRKCYEVGM (66 aa)). The tract at residues 246–302 (MKGGIRKDRRGGRLLKHKRQKEEQEQKNDVDPSEIRTASIWVNPSVKSMKLSPVLSL) is hinge. The segment covering 252 to 264 (KDRRGGRLLKHKR) has biased composition (basic residues). The interval 252–276 (KDRRGGRLLKHKRQKEEQEQKNDVD) is disordered. Residues 265 to 276 (QKEEQEQKNDVD) show a composition bias toward basic and acidic residues. Residues 303–539 (TAEQLISALM…DLLLEMLDAH (237 aa)) form the NR LBD domain. Basic and acidic residues predominate over residues 543 to 556 (TPKDKTTTQEEDSR). Residues 543–569 (TPKDKTTTQEEDSRSPPTTTVNGASPC) form a disordered region.

It belongs to the nuclear hormone receptor family. NR3 subfamily. In terms of assembly, binds DNA as a homodimer. Can form a heterodimer with ER-beta.

It localises to the nucleus. In terms of biological role, the steroid hormones and their receptors are involved in the regulation of eukaryotic gene expression and affect cellular proliferation and differentiation in target tissues. The protein is Estrogen receptor (esr1) of Xenopus laevis (African clawed frog).